A 104-amino-acid polypeptide reads, in one-letter code: Large ribosomal subunit protein bL21 (104 aa).

Belongs to the bacterial ribosomal protein bL21 family. Part of the 50S ribosomal subunit. Contacts protein L20.

Its function is as follows. This protein binds to 23S rRNA in the presence of protein L20. This chain is Large ribosomal subunit protein bL21, found in Opitutus terrae (strain DSM 11246 / JCM 15787 / PB90-1).